We begin with the raw amino-acid sequence, 511 residues long: ATP synthase subunit alpha 1 (511 aa).

Residue Gly-174 to Thr-181 participates in ATP binding.

The protein belongs to the ATPase alpha/beta chains family. In terms of assembly, F-type ATPases have 2 components, CF(1) - the catalytic core - and CF(0) - the membrane proton channel. CF(1) has five subunits: alpha(3), beta(3), gamma(1), delta(1), epsilon(1). CF(0) has four main subunits: a(1), b(1), b'(1) and c(9-12).

It is found in the cell inner membrane. It carries out the reaction ATP + H2O + 4 H(+)(in) = ADP + phosphate + 5 H(+)(out). In terms of biological role, produces ATP from ADP in the presence of a proton gradient across the membrane. The alpha chain is a regulatory subunit. The polypeptide is ATP synthase subunit alpha 1 (Chlorobium luteolum (strain DSM 273 / BCRC 81028 / 2530) (Pelodictyon luteolum)).